The sequence spans 131 residues: 14.7 kDa heat shock protein (131 aa).

Residues 1–11 are compositionally biased toward polar residues; it reads MSRNMEVNAGS. The interval 1-20 is disordered; it reads MSRNMEVNAGSSGEIPSPIR. One can recognise a sHSP domain in the interval 22–131; sequence RFQKSGSQAV…INVKERILHY (110 aa).

It belongs to the small heat shock protein (HSP20) family. In terms of assembly, may form oligomeric structures.

The protein resides in the cytoplasm. This chain is 14.7 kDa heat shock protein (HSP14.7), found in Arabidopsis thaliana (Mouse-ear cress).